We begin with the raw amino-acid sequence, 114 residues long: UPF0145 protein PYRAB04900 (114 aa).

It belongs to the UPF0145 family.

This Pyrococcus abyssi (strain GE5 / Orsay) protein is UPF0145 protein PYRAB04900.